A 371-amino-acid polypeptide reads, in one-letter code: DNA primase DnaG (371 aa).

The 76-residue stretch at 173–248 (DEIILVEGRA…DIDYVAVAPP (76 aa)) folds into the Toprim domain. Glu-179, Asp-221, and Asp-223 together coordinate Mg(2+).

This sequence belongs to the archaeal DnaG primase family. Forms a ternary complex with MCM helicase and DNA. Component of the archaeal exosome complex. Mg(2+) serves as cofactor.

It carries out the reaction ssDNA + n NTP = ssDNA/pppN(pN)n-1 hybrid + (n-1) diphosphate.. Functionally, RNA polymerase that catalyzes the synthesis of short RNA molecules used as primers for DNA polymerase during DNA replication. Also part of the exosome, which is a complex involved in RNA degradation. Acts as a poly(A)-binding protein that enhances the interaction between heteromeric, adenine-rich transcripts and the exosome. This chain is DNA primase DnaG, found in Nanoarchaeum equitans (strain Kin4-M).